Here is a 29-residue protein sequence, read N- to C-terminus: Glucagon (29 aa).

Phosphoserine is present on Ser-2.

Belongs to the glucagon family.

Its subcellular location is the secreted. Glucagon plays a key role in glucose metabolism and homeostasis. Regulates blood glucose by increasing gluconeogenesis and decreasing glycolysis. This chain is Glucagon (GCG), found in Oryctolagus cuniculus (Rabbit).